We begin with the raw amino-acid sequence, 139 residues long: Arsenate reductase (139 aa).

Catalysis depends on nucleophile residues Cys10, Cys82, and Cys89. Intrachain disulfides connect Cys10-Cys82 and Cys82-Cys89.

It belongs to the low molecular weight phosphotyrosine protein phosphatase family. Thioredoxin-coupled ArsC subfamily.

It localises to the cytoplasm. The catalysed reaction is arsenate + [thioredoxin]-dithiol + H(+) = arsenite + [thioredoxin]-disulfide + H2O. Functionally, catalyzes the reduction of arsenate [As(V)] to arsenite [As(III)]. This chain is Arsenate reductase, found in Halalkalibacterium halodurans (strain ATCC BAA-125 / DSM 18197 / FERM 7344 / JCM 9153 / C-125) (Bacillus halodurans).